A 439-amino-acid polypeptide reads, in one-letter code: Secreted aspartic protease LUC8 (439 aa).

The N-terminal stretch at 1-20 (MMHAFHHLAVLLIGSLPASA) is a signal peptide. Asparagine 33 and asparagine 54 each carry an N-linked (GlcNAc...) asparagine glycan. Residues 51 to 435 (YLFNITVGTP…DFETQSFGLA (385 aa)) enclose the Peptidase A1 domain. Residue aspartate 69 is part of the active site. N-linked (GlcNAc...) asparagine glycans are attached at residues asparagine 110, asparagine 126, asparagine 179, and asparagine 289. Aspartate 300 is a catalytic residue. Residues asparagine 329 and asparagine 373 are each glycosylated (N-linked (GlcNAc...) asparagine). Cysteine 355 and cysteine 391 are oxidised to a cystine.

It belongs to the peptidase A1 family.

It localises to the secreted. Functionally, secreted aspartic protease; part of the gene cluster that mediates the biosynthesis of the mycotoxin lucilactaene and the lucilactaene-related compound NG-391 that act as cell cycle inhibitors with potent growth inhibitory activity against malarial parasites, moderate growth inhibitory activity against cancer cells, and no activity against bacteria and fungi. Within the cluster, LUC7 and LUC8 encode proteins which are not commonly involved in the biosynthesis of secondary metabolites and are not essential for lucilactaene biosynthesis. This chain is Secreted aspartic protease LUC8, found in Fusarium sp.